The primary structure comprises 545 residues: CTP synthase (545 aa).

Positions 1-266 (MTTNYIFVTG…DDYICKRFSL (266 aa)) are amidoligase domain. Residue Ser-14 participates in CTP binding. Position 14 (Ser-14) interacts with UTP. ATP contacts are provided by residues 15–20 (SLGKGI) and Asp-72. Residues Asp-72 and Glu-140 each contribute to the Mg(2+) site. Residues 147–149 (DIE), 187–192 (KTKPTQ), and Lys-223 contribute to the CTP site. UTP-binding positions include 187–192 (KTKPTQ) and Lys-223. 239–241 (KDV) is an ATP binding site. Residues 291-542 (TIGMVGKYIE…VKAASEYQKR (252 aa)) enclose the Glutamine amidotransferase type-1 domain. Residue Gly-352 participates in L-glutamine binding. The active-site Nucleophile; for glutamine hydrolysis is Cys-379. L-glutamine is bound by residues 380 to 383 (LGMQ), Glu-403, and Arg-470. Residues His-515 and Glu-517 contribute to the active site.

The protein belongs to the CTP synthase family. As to quaternary structure, homotetramer.

The enzyme catalyses UTP + L-glutamine + ATP + H2O = CTP + L-glutamate + ADP + phosphate + 2 H(+). It catalyses the reaction L-glutamine + H2O = L-glutamate + NH4(+). The catalysed reaction is UTP + NH4(+) + ATP = CTP + ADP + phosphate + 2 H(+). The protein operates within pyrimidine metabolism; CTP biosynthesis via de novo pathway; CTP from UDP: step 2/2. Allosterically activated by GTP, when glutamine is the substrate; GTP has no effect on the reaction when ammonia is the substrate. The allosteric effector GTP functions by stabilizing the protein conformation that binds the tetrahedral intermediate(s) formed during glutamine hydrolysis. Inhibited by the product CTP, via allosteric rather than competitive inhibition. Catalyzes the ATP-dependent amination of UTP to CTP with either L-glutamine or ammonia as the source of nitrogen. Regulates intracellular CTP levels through interactions with the four ribonucleotide triphosphates. The sequence is that of CTP synthase from Klebsiella pneumoniae (strain 342).